Consider the following 93-residue polypeptide: Alpha-defensin 10 (93 aa).

Residues M1–A19 form the signal peptide. A propeptide spanning residues D20 to S58 is cleaved from the precursor. Positions I22–E56 are disordered. Cystine bridges form between C64–C92, C66–C81, and C71–C91.

Belongs to the alpha-defensin family. As to expression, paneth cells of the small bowel.

The protein resides in the secreted. Probably contributes to the antimicrobial barrier function of the small bowel mucosa. This is Alpha-defensin 10 (Defa10) from Mus musculus (Mouse).